Here is a 376-residue protein sequence, read N- to C-terminus: CC-adding tRNA nucleotidyltransferase (376 aa).

26–29 provides a ligand contact to CTP; sequence GAVR. Mg(2+) is bound by residues Asp-39 and Asp-41. CTP is bound by residues 94–95, Asn-99, 136–145, and Arg-176; these read RD and DPLRMLRAAR.

The protein belongs to the tRNA nucleotidyltransferase/poly(A) polymerase family. Mg(2+) is required as a cofactor.

The enzyme catalyses a tRNA precursor + 2 CTP = a tRNA with a 3' CC end + 2 diphosphate. Functionally, tRNA nucleotidyltransferase involved in the synthesis of the tRNA CCA terminus. Adds the two cytidine residues to tRNA. The polypeptide is CC-adding tRNA nucleotidyltransferase (Shouchella clausii (strain KSM-K16) (Alkalihalobacillus clausii)).